We begin with the raw amino-acid sequence, 87 residues long: Exodeoxyribonuclease 7 small subunit (87 aa).

It belongs to the XseB family. As to quaternary structure, heterooligomer composed of large and small subunits.

The protein resides in the cytoplasm. The catalysed reaction is Exonucleolytic cleavage in either 5'- to 3'- or 3'- to 5'-direction to yield nucleoside 5'-phosphates.. Functionally, bidirectionally degrades single-stranded DNA into large acid-insoluble oligonucleotides, which are then degraded further into small acid-soluble oligonucleotides. This is Exodeoxyribonuclease 7 small subunit from Serratia proteamaculans (strain 568).